Here is a 311-residue protein sequence, read N- to C-terminus: HPr kinase/phosphorylase (311 aa).

Active-site residues include His138 and Lys159. Gly153–Ser160 contributes to the ATP binding site. Position 160 (Ser160) interacts with Mg(2+). The active-site Proton acceptor; for phosphorylation activity. Proton donor; for dephosphorylation activity is Asp177. The important for the catalytic mechanism of both phosphorylation and dephosphorylation stretch occupies residues Leu201–Asn210. Position 202 (Glu202) interacts with Mg(2+). Arg243 is a catalytic residue. Positions Pro264–Arg269 are important for the catalytic mechanism of dephosphorylation.

Belongs to the HPrK/P family. Homohexamer. Mg(2+) serves as cofactor.

The catalysed reaction is [HPr protein]-L-serine + ATP = [HPr protein]-O-phospho-L-serine + ADP + H(+). It carries out the reaction [HPr protein]-O-phospho-L-serine + phosphate + H(+) = [HPr protein]-L-serine + diphosphate. Catalyzes the ATP- as well as the pyrophosphate-dependent phosphorylation of a specific serine residue in HPr, a phosphocarrier protein of the phosphoenolpyruvate-dependent sugar phosphotransferase system (PTS). HprK/P also catalyzes the pyrophosphate-producing, inorganic phosphate-dependent dephosphorylation (phosphorolysis) of seryl-phosphorylated HPr (P-Ser-HPr). The two antagonistic activities of HprK/P are regulated by several intracellular metabolites, which change their concentration in response to the absence or presence of rapidly metabolisable carbon sources (glucose, fructose, etc.) in the growth medium. Therefore, by controlling the phosphorylation state of HPr, HPrK/P is a sensor enzyme that plays a major role in the regulation of carbon metabolism and sugar transport: it mediates carbon catabolite repression (CCR), and regulates PTS-catalyzed carbohydrate uptake and inducer exclusion. The protein is HPr kinase/phosphorylase of Brevibacillus brevis (strain 47 / JCM 6285 / NBRC 100599).